The chain runs to 413 residues: Gamma-glutamyl phosphate reductase (413 aa).

Belongs to the gamma-glutamyl phosphate reductase family.

The protein resides in the cytoplasm. It carries out the reaction L-glutamate 5-semialdehyde + phosphate + NADP(+) = L-glutamyl 5-phosphate + NADPH + H(+). Its pathway is amino-acid biosynthesis; L-proline biosynthesis; L-glutamate 5-semialdehyde from L-glutamate: step 2/2. Its function is as follows. Catalyzes the NADPH-dependent reduction of L-glutamate 5-phosphate into L-glutamate 5-semialdehyde and phosphate. The product spontaneously undergoes cyclization to form 1-pyrroline-5-carboxylate. The protein is Gamma-glutamyl phosphate reductase of Rhodococcus jostii (strain RHA1).